Reading from the N-terminus, the 213-residue chain is Probable glutathione S-transferase DHAR1, cytosolic (213 aa).

The glutathione site is built by K8 and D19. Residues K8 and D19 each contribute to the L-ascorbate site. The region spanning 10 to 89 is the GST N-terminal domain; that stretch reads AVGHPDTLGD…VIEEKYPTPS (80 aa). The active-site Nucleophile is the C20. K47, V60, S74, H160, and W207 together coordinate glutathione. In terms of domain architecture, GST C-terminal spans 73–213; the sequence is DSDVITQVIE…IAGWAPKVNA (141 aa). L-ascorbate is bound at residue K210.

The protein belongs to the GST superfamily. DHAR family. As to quaternary structure, monomer.

The protein resides in the cytoplasm. It localises to the cytosol. The catalysed reaction is RX + glutathione = an S-substituted glutathione + a halide anion + H(+). The enzyme catalyses L-dehydroascorbate + 2 glutathione = glutathione disulfide + L-ascorbate. Involved in ascorbate homeostasis. Maintains redox pools of ascorbate by recycling dihydroascorbate (DHA) to ascorbate. Involved in scavenging reactive oxygen species (ROS) under oxidative stresses. Possesses dehydroascorbate reductase (DHAR) activity in vitro. May function via a ping-pong reaction mechanism with an electron transfer at the active site. Possesses chaperone-like activity in vitro. The polypeptide is Probable glutathione S-transferase DHAR1, cytosolic (Oryza sativa subsp. japonica (Rice)).